The chain runs to 196 residues: Probable nicotinate-nucleotide adenylyltransferase (196 aa).

It belongs to the NadD family.

The catalysed reaction is nicotinate beta-D-ribonucleotide + ATP + H(+) = deamido-NAD(+) + diphosphate. Its pathway is cofactor biosynthesis; NAD(+) biosynthesis; deamido-NAD(+) from nicotinate D-ribonucleotide: step 1/1. Its function is as follows. Catalyzes the reversible adenylation of nicotinate mononucleotide (NaMN) to nicotinic acid adenine dinucleotide (NaAD). This Caldicellulosiruptor saccharolyticus (strain ATCC 43494 / DSM 8903 / Tp8T 6331) protein is Probable nicotinate-nucleotide adenylyltransferase.